The sequence spans 339 residues: Ribosomal RNA large subunit methyltransferase M (339 aa).

Residues Ser176, 206-209 (APGG), Asp225, Asp245, and Asp261 each bind S-adenosyl-L-methionine. Catalysis depends on Lys290, which acts as the Proton acceptor.

This sequence belongs to the class I-like SAM-binding methyltransferase superfamily. RNA methyltransferase RlmE family. RlmM subfamily. Monomer.

Its subcellular location is the cytoplasm. The catalysed reaction is cytidine(2498) in 23S rRNA + S-adenosyl-L-methionine = 2'-O-methylcytidine(2498) in 23S rRNA + S-adenosyl-L-homocysteine + H(+). Its function is as follows. Catalyzes the 2'-O-methylation at nucleotide C2498 in 23S rRNA. The polypeptide is Ribosomal RNA large subunit methyltransferase M (Halorhodospira halophila (strain DSM 244 / SL1) (Ectothiorhodospira halophila (strain DSM 244 / SL1))).